The following is a 338-amino-acid chain: Glycerol-3-phosphate dehydrogenase [NAD(P)+] (338 aa).

NADPH-binding residues include Ser-13, Trp-14, and Lys-108. 3 residues coordinate sn-glycerol 3-phosphate: Lys-108, Gly-139, and Ser-141. Ala-143 serves as a coordination point for NADPH. Positions 194, 247, 257, 258, and 259 each coordinate sn-glycerol 3-phosphate. The active-site Proton acceptor is Lys-194. An NADPH-binding site is contributed by Arg-258. 2 residues coordinate NADPH: Val-282 and Glu-284.

The protein belongs to the NAD-dependent glycerol-3-phosphate dehydrogenase family.

The protein localises to the cytoplasm. The enzyme catalyses sn-glycerol 3-phosphate + NAD(+) = dihydroxyacetone phosphate + NADH + H(+). It carries out the reaction sn-glycerol 3-phosphate + NADP(+) = dihydroxyacetone phosphate + NADPH + H(+). It functions in the pathway membrane lipid metabolism; glycerophospholipid metabolism. In terms of biological role, catalyzes the reduction of the glycolytic intermediate dihydroxyacetone phosphate (DHAP) to sn-glycerol 3-phosphate (G3P), the key precursor for phospholipid synthesis. The sequence is that of Glycerol-3-phosphate dehydrogenase [NAD(P)+] from Streptococcus gordonii (strain Challis / ATCC 35105 / BCRC 15272 / CH1 / DL1 / V288).